The following is a 391-amino-acid chain: Deoxyguanosinetriphosphate triphosphohydrolase-like protein (391 aa).

The 137-residue stretch at 62–198 (RLTHSLEVST…ASLADDISYI (137 aa)) folds into the HD domain.

This sequence belongs to the dGTPase family. Type 2 subfamily.

This is Deoxyguanosinetriphosphate triphosphohydrolase-like protein from Rickettsia akari (strain Hartford).